The chain runs to 537 residues: Tyrosine-protein phosphatase CDC14 homolog (537 aa).

In terms of domain architecture, Tyrosine-protein phosphatase spans 182–345 (DFNWISPKFI…QVHFRAYFYE (164 aa)). Cysteine 286 serves as the catalytic Phosphocysteine intermediate. The tract at residues 359–537 (EPLATPPRHP…PKPSKSRLIS (179 aa)) is disordered. Polar residues predominate over residues 370-382 (NATNGTSQSNIST). A compositionally biased stretch (low complexity) spans 400–411 (PPSARRLPSASS). Residues 421-437 (ASKQSIQNENKASYSSY) are compositionally biased toward polar residues. Position 453 is a phosphothreonine (threonine 453). Serine 468 and serine 470 each carry phosphoserine. The span at 490-502 (RRTSGNRWSSGSS) shows a compositional bias: low complexity. Serine 513 carries the post-translational modification Phosphoserine. The segment covering 514 to 523 (MSSLNNTSNG) has biased composition (polar residues). Residues 526–537 (AKPKPSKSRLIS) are compositionally biased toward basic residues.

It belongs to the protein-tyrosine phosphatase family. Non-receptor class CDC14 subfamily. Interacts with ark1 at the kinetochores. Interacts with bir1, cdc25, mid1, nbl1, pic1, and rad24. In terms of processing, phosphorylated by cds1, chk1, pmk1, and cdc2 upon Hydroxylurea and H(2)O(2) stress treatment. Phosphorylation regulates the nucleolar-to-nucleoplasmic transition. Is able to autodephosphorylate.

Its subcellular location is the nucleus. The protein resides in the nucleolus. The protein localises to the cytoplasm. It is found in the cytoskeleton. It localises to the microtubule organizing center. Its subcellular location is the spindle pole body. The enzyme catalyses O-phospho-L-tyrosyl-[protein] + H2O = L-tyrosyl-[protein] + phosphate. In terms of biological role, protein phosphatase which antagonizes mitotic cyclin-dependent kinase cdc2, the inactivation of which is essential for exit from mitosis. To access its substrates, is released from nucleolar sequestration during mitosis. Plays an essential in coordinating the nuclear division cycle with cytokinesis through the cytokinesis checkpoint. Involved in chromosome segregation, where it is required for meiosis I spindle dissambly as well as for establishing two consecutive chromosome segregation phases. Allows damaged actomyosin rings to be maintained to facilitate completion of cell division in response to minor perturbation of the cell division machinery. Dephosphorylates the mitotic inducer cdc25 for its rapid degradation. Down-regulation of cdc25 activity ensures a prompt inactivation of mitotic cdc2 complexes to trigger cell division. Also dephosphorylates cdc2-phosphorylated nsk1, allowing nsk1-binding to kinetochores and spindle. Dephosphorylates ase1, which is essential for spindle midzone assembly and for continuous extension of the anaphase spindle. Tethered to the contractile ring by mid1, where it dephosphorylates cdc15. This Schizosaccharomyces pombe (strain 972 / ATCC 24843) (Fission yeast) protein is Tyrosine-protein phosphatase CDC14 homolog (clp1).